The following is a 310-amino-acid chain: Aspartate carbamoyltransferase catalytic subunit (310 aa).

Carbamoyl phosphate-binding residues include arginine 55 and threonine 56. Lysine 83 provides a ligand contact to L-aspartate. Positions 105, 136, and 139 each coordinate carbamoyl phosphate. L-aspartate is bound by residues arginine 169 and arginine 223. Carbamoyl phosphate is bound by residues glycine 264 and proline 265.

This sequence belongs to the aspartate/ornithine carbamoyltransferase superfamily. ATCase family. In terms of assembly, heterododecamer (2C3:3R2) of six catalytic PyrB chains organized as two trimers (C3), and six regulatory PyrI chains organized as three dimers (R2).

It catalyses the reaction carbamoyl phosphate + L-aspartate = N-carbamoyl-L-aspartate + phosphate + H(+). Its pathway is pyrimidine metabolism; UMP biosynthesis via de novo pathway; (S)-dihydroorotate from bicarbonate: step 2/3. Its function is as follows. Catalyzes the condensation of carbamoyl phosphate and aspartate to form carbamoyl aspartate and inorganic phosphate, the committed step in the de novo pyrimidine nucleotide biosynthesis pathway. The sequence is that of Aspartate carbamoyltransferase catalytic subunit from Saccharopolyspora erythraea (strain ATCC 11635 / DSM 40517 / JCM 4748 / NBRC 13426 / NCIMB 8594 / NRRL 2338).